The sequence spans 425 residues: tRNA(Ile)-lysidine synthase (425 aa).

27-32 contributes to the ATP binding site; the sequence is SGGLDS.

The protein belongs to the tRNA(Ile)-lysidine synthase family.

It is found in the cytoplasm. It catalyses the reaction cytidine(34) in tRNA(Ile2) + L-lysine + ATP = lysidine(34) in tRNA(Ile2) + AMP + diphosphate + H(+). Its function is as follows. Ligates lysine onto the cytidine present at position 34 of the AUA codon-specific tRNA(Ile) that contains the anticodon CAU, in an ATP-dependent manner. Cytidine is converted to lysidine, thus changing the amino acid specificity of the tRNA from methionine to isoleucine. The sequence is that of tRNA(Ile)-lysidine synthase from Streptococcus pneumoniae (strain Hungary19A-6).